Here is a 797-residue protein sequence, read N- to C-terminus: Trafficking protein particle complex subunit 12 (797 aa).

Disordered stretches follow at residues 1–257 (META…PSLS) and 286–338 (SNPN…VPES). Low complexity predominate over residues 9–23 (QSPSEASPSAQAGPE). Residues 29–43 (MSREEESQPLYHEET) are compositionally biased toward basic and acidic residues. The segment covering 47 to 58 (GGDEFASEENEP) has biased composition (acidic residues). Composition is skewed to basic and acidic residues over residues 66–75 (FGDKLNEHMM) and 107–121 (ATDH…KEVV). Residues Ser125 and Ser128 each carry the phosphoserine modification. Position 130 is a phosphothreonine (Thr130). Positions 173–185 (VGPKDSLAPREEQ) are enriched in basic and acidic residues. A compositionally biased stretch (polar residues) spans 206 to 216 (IFSQATATPSQ). Residues 232–244 (SPSFSSTSETSAK) are compositionally biased toward low complexity. Ser234, Ser309, and Ser314 each carry phosphoserine. TPR repeat units follow at residues 607-640 (GRVL…YPEQ), 642-675 (PQLL…TQKL), 682-715 (IMVL…DPTN), and 716-749 (AVAN…DPRH).

As to quaternary structure, component of the multisubunit TRAPP (transport protein particle) complex, which includes at least TRAPPC2, TRAPPC2L, TRAPPC3, TRAPPC3L, TRAPPC4, TRAPPC5, TRAPPC8, TRAPPC9, TRAPPC10, TRAPPC11 and TRAPPC12. Interacts with CENPE. In terms of processing, phosphorylated as the cells enter mitosis but is dephosphorylated at or before the onset of anaphase. The phosphorylated form recruits CENPE to kinetochores more efficiently than the non-phosphorylated form.

It localises to the endoplasmic reticulum-Golgi intermediate compartment. The protein resides in the nucleus. In terms of biological role, component of the TRAPP complex, which is involved in endoplasmic reticulum to Golgi apparatus trafficking at a very early stage. Also plays a role in chromosome congression, kinetochore assembly and stability and controls the recruitment of CENPE to the kinetochores. The protein is Trafficking protein particle complex subunit 12 of Mus musculus (Mouse).